The primary structure comprises 406 residues: Putative colanic acid biosynthesis glycosyltransferase WcaL (406 aa).

Belongs to the glycosyltransferase group 1 family. Glycosyltransferase 4 subfamily.

It functions in the pathway slime biogenesis; slime polysaccharide biosynthesis. The protein is Putative colanic acid biosynthesis glycosyltransferase WcaL (wcaL) of Salmonella typhimurium (strain LT2 / SGSC1412 / ATCC 700720).